A 98-amino-acid chain; its full sequence is Large ribosomal subunit protein uL23 (98 aa).

The protein belongs to the universal ribosomal protein uL23 family. Part of the 50S ribosomal subunit. Contacts protein L29, and trigger factor when it is bound to the ribosome.

In terms of biological role, one of the early assembly proteins it binds 23S rRNA. One of the proteins that surrounds the polypeptide exit tunnel on the outside of the ribosome. Forms the main docking site for trigger factor binding to the ribosome. The chain is Large ribosomal subunit protein uL23 from Rickettsia akari (strain Hartford).